Reading from the N-terminus, the 371-residue chain is Cytochrome b (371 aa).

A run of 4 helical transmembrane segments spans residues 25 to 45 (FGSM…FLAV), 69 to 90 (WMMQ…YIHI), 105 to 125 (WMSG…GYVL), and 170 to 190 (FFAL…LHII). 2 residues coordinate heme b: histidine 75 and histidine 89. Heme b-binding residues include histidine 174 and histidine 188. An a ubiquinone-binding site is contributed by histidine 193. A run of 4 helical transmembrane segments spans residues 218–238 (HKDL…VSFS), 280–300 (LGGA…PFTH), 312–332 (LSQL…WAAT), and 339–358 (FIII…LSIP).

The protein belongs to the cytochrome b family. The cytochrome bc1 complex contains 3 respiratory subunits (MT-CYB, CYC1 and UQCRFS1), 2 core proteins (UQCRC1 and UQCRC2) and probably 6 low-molecular weight proteins. Heme b is required as a cofactor.

Its subcellular location is the mitochondrion inner membrane. Its function is as follows. Component of the ubiquinol-cytochrome c reductase complex (complex III or cytochrome b-c1 complex) that is part of the mitochondrial respiratory chain. The b-c1 complex mediates electron transfer from ubiquinol to cytochrome c. Contributes to the generation of a proton gradient across the mitochondrial membrane that is then used for ATP synthesis. The protein is Cytochrome b (MT-CYB) of Antaresia childreni (Children's python).